The following is a 116-amino-acid chain: Large ribosomal subunit protein bL17 (116 aa).

The protein belongs to the bacterial ribosomal protein bL17 family. As to quaternary structure, part of the 50S ribosomal subunit. Contacts protein L32.

This chain is Large ribosomal subunit protein bL17, found in Dictyoglomus thermophilum (strain ATCC 35947 / DSM 3960 / H-6-12).